Consider the following 165-residue polypeptide: U11/U12 small nuclear ribonucleoprotein 25 kDa protein (165 aa).

Positions 52–137 constitute a Ubiquitin-like domain; that stretch reads MRLSVVKLDG…IRNNSQVTFM (86 aa). Positions 145-165 are disordered; it reads RGRHSKRKKHRLFRSLHKTSS.

Component of the U11/U12 snRNPs that are part of the U12-type spliceosome.

It is found in the nucleus. This chain is U11/U12 small nuclear ribonucleoprotein 25 kDa protein (SNRNP25), found in Arabidopsis thaliana (Mouse-ear cress).